A 1177-amino-acid chain; its full sequence is DNA-directed RNA polymerase subunit beta (1177 aa).

Acidic residues predominate over residues 1147–1161 (DDTEIEMRDTEDDDD). A disordered region spans residues 1147-1177 (DDTEIEMRDTEDDDDHQSADKLNVEVETTKE). Over residues 1162–1177 (HQSADKLNVEVETTKE) the composition is skewed to basic and acidic residues.

This sequence belongs to the RNA polymerase beta chain family. In terms of assembly, the RNAP catalytic core consists of 2 alpha, 1 beta, 1 beta' and 1 omega subunit. When a sigma factor is associated with the core the holoenzyme is formed, which can initiate transcription.

It catalyses the reaction RNA(n) + a ribonucleoside 5'-triphosphate = RNA(n+1) + diphosphate. Functionally, DNA-dependent RNA polymerase catalyzes the transcription of DNA into RNA using the four ribonucleoside triphosphates as substrates. The chain is DNA-directed RNA polymerase subunit beta from Bacillus cereus (strain G9842).